The chain runs to 428 residues: GTPase Obg (428 aa).

The region spanning 1-158 (MFVDQVKVYV…RYIVLELKVL (158 aa)) is the Obg domain. A disordered region spans residues 117-143 (AKGGRGGRGNTRFATPANPAPQLSEHG). An OBG-type G domain is found at 159 to 329 (ADVGLVGFPS…LLFEVANQLE (171 aa)). GTP is bound by residues 165 to 172 (GFPSVGKS), 190 to 194 (FTTLV), 212 to 215 (DLPG), 282 to 285 (NKMD), and 310 to 312 (SAV). S172 and T192 together coordinate Mg(2+). The 79-residue stretch at 350 to 428 (TMEDEEIPFN…LLEFEFEFID (79 aa)) folds into the OCT domain.

The protein belongs to the TRAFAC class OBG-HflX-like GTPase superfamily. OBG GTPase family. As to quaternary structure, monomer. It depends on Mg(2+) as a cofactor.

It localises to the cytoplasm. An essential GTPase which binds GTP, GDP and possibly (p)ppGpp with moderate affinity, with high nucleotide exchange rates and a fairly low GTP hydrolysis rate. Plays a role in control of the cell cycle, stress response, ribosome biogenesis and in those bacteria that undergo differentiation, in morphogenesis control. In Bacillus velezensis (strain DSM 23117 / BGSC 10A6 / LMG 26770 / FZB42) (Bacillus amyloliquefaciens subsp. plantarum), this protein is GTPase Obg.